Consider the following 489-residue polypeptide: UDP-N-acetylmuramoyl-L-alanyl-D-glutamate--2,6-diaminopimelate ligase (489 aa).

A UDP-N-acetyl-alpha-D-muramoyl-L-alanyl-D-glutamate-binding site is contributed by serine 30. 108 to 114 (GTNGKTT) lines the ATP pocket. UDP-N-acetyl-alpha-D-muramoyl-L-alanyl-D-glutamate-binding positions include asparagine 149, 150–151 (TT), serine 177, glutamine 183, and arginine 185. Lysine 217 is subject to N6-carboxylysine. Meso-2,6-diaminopimelate contacts are provided by residues arginine 383, 407-410 (DNPR), glycine 459, and glutamate 463. Positions 407-410 (DNPR) match the Meso-diaminopimelate recognition motif motif.

Belongs to the MurCDEF family. MurE subfamily. Mg(2+) serves as cofactor. In terms of processing, carboxylation is probably crucial for Mg(2+) binding and, consequently, for the gamma-phosphate positioning of ATP.

The protein resides in the cytoplasm. The catalysed reaction is UDP-N-acetyl-alpha-D-muramoyl-L-alanyl-D-glutamate + meso-2,6-diaminopimelate + ATP = UDP-N-acetyl-alpha-D-muramoyl-L-alanyl-gamma-D-glutamyl-meso-2,6-diaminopimelate + ADP + phosphate + H(+). It functions in the pathway cell wall biogenesis; peptidoglycan biosynthesis. Its function is as follows. Catalyzes the addition of meso-diaminopimelic acid to the nucleotide precursor UDP-N-acetylmuramoyl-L-alanyl-D-glutamate (UMAG) in the biosynthesis of bacterial cell-wall peptidoglycan. This is UDP-N-acetylmuramoyl-L-alanyl-D-glutamate--2,6-diaminopimelate ligase from Geobacillus thermodenitrificans (strain NG80-2).